We begin with the raw amino-acid sequence, 378 residues long: Deoxyguanosinetriphosphate triphosphohydrolase-like protein (378 aa).

The region spanning 62–198 (RLTHTIEVAQ…AAVADDVAYN (137 aa)) is the HD domain.

Belongs to the dGTPase family. Type 2 subfamily.

This chain is Deoxyguanosinetriphosphate triphosphohydrolase-like protein, found in Paracoccus denitrificans (strain Pd 1222).